Consider the following 141-residue polypeptide: Nucleoside diphosphate kinase (141 aa).

The ATP site is built by K11, F59, R87, T93, R104, and N114. The active-site Pros-phosphohistidine intermediate is H117.

It belongs to the NDK family. Homotetramer. The cofactor is Mg(2+).

The protein localises to the cytoplasm. The enzyme catalyses a 2'-deoxyribonucleoside 5'-diphosphate + ATP = a 2'-deoxyribonucleoside 5'-triphosphate + ADP. It carries out the reaction a ribonucleoside 5'-diphosphate + ATP = a ribonucleoside 5'-triphosphate + ADP. In terms of biological role, major role in the synthesis of nucleoside triphosphates other than ATP. The ATP gamma phosphate is transferred to the NDP beta phosphate via a ping-pong mechanism, using a phosphorylated active-site intermediate. This Xylella fastidiosa (strain M23) protein is Nucleoside diphosphate kinase.